The following is a 389-amino-acid chain: 5-amino-6-(D-ribitylamino)uracil--L-tyrosine 4-hydroxyphenyl transferase (389 aa).

Positions 56–298 (VSYVINRNIN…QAVARLFFGR (243 aa)) constitute a Radical SAM core domain. 3 residues coordinate [4Fe-4S] cluster: cysteine 70, cysteine 74, and cysteine 77.

The protein belongs to the radical SAM superfamily. CofH family. As to quaternary structure, consists of two subunits, CofG and CofH. The cofactor is [4Fe-4S] cluster.

It carries out the reaction 5-amino-6-(D-ribitylamino)uracil + L-tyrosine + S-adenosyl-L-methionine = 5-amino-5-(4-hydroxybenzyl)-6-(D-ribitylimino)-5,6-dihydrouracil + 2-iminoacetate + 5'-deoxyadenosine + L-methionine + H(+). It participates in cofactor biosynthesis; coenzyme F0 biosynthesis. In terms of biological role, catalyzes the radical-mediated synthesis of 5-amino-5-(4-hydroxybenzyl)-6-(D-ribitylimino)-5,6-dihydrouracil from 5-amino-6-(D-ribitylamino)uracil and L-tyrosine. The sequence is that of 5-amino-6-(D-ribitylamino)uracil--L-tyrosine 4-hydroxyphenyl transferase from Gloeobacter violaceus (strain ATCC 29082 / PCC 7421).